Here is a 514-residue protein sequence, read N- to C-terminus: ATP synthase subunit alpha (514 aa).

170–177 (GDRQIGKT) lines the ATP pocket.

It belongs to the ATPase alpha/beta chains family. In terms of assembly, F-type ATPases have 2 components, CF(1) - the catalytic core - and CF(0) - the membrane proton channel. CF(1) has five subunits: alpha(3), beta(3), gamma(1), delta(1), epsilon(1). CF(0) has three main subunits: a(1), b(2) and c(9-12). The alpha and beta chains form an alternating ring which encloses part of the gamma chain. CF(1) is attached to CF(0) by a central stalk formed by the gamma and epsilon chains, while a peripheral stalk is formed by the delta and b chains.

It localises to the cell inner membrane. The enzyme catalyses ATP + H2O + 4 H(+)(in) = ADP + phosphate + 5 H(+)(out). Functionally, produces ATP from ADP in the presence of a proton gradient across the membrane. The alpha chain is a regulatory subunit. The sequence is that of ATP synthase subunit alpha from Pseudomonas putida (strain ATCC 700007 / DSM 6899 / JCM 31910 / BCRC 17059 / LMG 24140 / F1).